Here is a 146-residue protein sequence, read N- to C-terminus: Large ribosomal subunit protein uL15 (146 aa).

A compositionally biased stretch (polar residues) spans Met-1–Ala-10. The segment at Met-1–Gln-54 is disordered. Positions Arg-21–Ala-31 are enriched in gly residues.

The protein belongs to the universal ribosomal protein uL15 family. As to quaternary structure, part of the 50S ribosomal subunit.

Binds to the 23S rRNA. In Halorhodospira halophila (strain DSM 244 / SL1) (Ectothiorhodospira halophila (strain DSM 244 / SL1)), this protein is Large ribosomal subunit protein uL15.